Reading from the N-terminus, the 130-residue chain is Small ribosomal subunit protein uS9 (130 aa).

The tract at residues 109-130 is disordered; sequence RMKERKKYGLKKARRAPQFSKR. A compositionally biased stretch (basic residues) spans 111–130; the sequence is KERKKYGLKKARRAPQFSKR.

This sequence belongs to the universal ribosomal protein uS9 family.

This is Small ribosomal subunit protein uS9 from Clostridium kluyveri (strain NBRC 12016).